A 502-amino-acid polypeptide reads, in one-letter code: D-erythritol 1-phosphate dehydrogenase (502 aa).

8–36 (DLFVIGGGINGAGVARDAAGRGLKVVLAE) serves as a coordination point for FAD.

This sequence belongs to the FAD-dependent glycerol-3-phosphate dehydrogenase family. FAD is required as a cofactor.

The enzyme catalyses D-erythritol 1-phosphate + NADP(+) = D-erythrulose 1-phosphate + NADPH + H(+). Its pathway is carbohydrate metabolism; erythritol degradation. Functionally, catalyzes the oxydation of D-erythritol 1-phosphate to D-erythrulose 1-phosphate. The protein is D-erythritol 1-phosphate dehydrogenase of Brucella abortus (strain 2308).